The sequence spans 172 residues: Ribosome maturation factor RimM (172 aa).

Residues 96 to 168 (EGEFYYHQII…RVDVELMEGL (73 aa)) form the PRC barrel domain.

It belongs to the RimM family. In terms of assembly, binds ribosomal protein uS19.

It is found in the cytoplasm. Functionally, an accessory protein needed during the final step in the assembly of 30S ribosomal subunit, possibly for assembly of the head region. Essential for efficient processing of 16S rRNA. May be needed both before and after RbfA during the maturation of 16S rRNA. It has affinity for free ribosomal 30S subunits but not for 70S ribosomes. In Streptococcus pyogenes serotype M6 (strain ATCC BAA-946 / MGAS10394), this protein is Ribosome maturation factor RimM.